A 272-amino-acid polypeptide reads, in one-letter code: Transcription factor PU.1 (272 aa).

The segment at 126–165 (SPAHQQSSDEEEGERQSPPLEVSDGEADGLEPGPGLLHGE) is disordered. Phosphoserine occurs at positions 142 and 148. A compositionally biased stretch (low complexity) spans 155–165 (LEPGPGLLHGE). The segment at residues 172 to 255 (IRLYQFLLDL…VKKKLTYQFS (84 aa)) is a DNA-binding region (ETS). Positions 219, 232, 235, and 245 each coordinate DNA.

This sequence belongs to the ETS family. As to quaternary structure, binds DNA as a monomer. Can form homomers. Directly interacts with CEBPD/NF-IL6-beta; this interaction does not affect DNA-binding properties of each partner. Interacts with NONO/p54(nrb). Interacts with RUNX1/AML1. Interacts with GFI1; the interaction represses SPI1 transcriptional activity, hence blocks SPI1-induced macrophage differentiation of myeloid progenitor cells. Interacts with CEBPE. Interacts with IRF4/Pip and IRF8. Interacts with JUN. Interacts with RB1. Interacts with TBP. Expressed in spleen, thymus and bone-marrow macrophages.

The protein localises to the nucleus. Transcriptional activity at macrophage-specific genes is inhibited by interaction with GFI1, which results in inhibition of SPI1-induced macrophage differentiation of myeloid progenitor cells, but not that of the granulocyte lineage. Pioneer transcription factor, which controls hematopoietic cell fate by decompacting stem cell heterochromatin and allowing other transcription factors to enter otherwise inaccessible genomic sites. Once in open chromatin, can directly control gene expression by binding genetic regulatory elements and can also more broadly influence transcription by recruiting transcription factors, such as interferon regulatory factors (IRFs), to otherwise inaccessible genomic regions. Transcriptionally activates genes important for myeloid and lymphoid lineages, such as CSF1R. Transcriptional activation from certain promoters, possibly containing low affinity binding sites, is achieved cooperatively with other transcription factors. FCER1A transactivation is achieved in cooperation with GATA1. May be particularly important for the pro- to pre-B cell transition. Binds (via the ETS domain) onto the purine-rich DNA core sequence 5'-GAGGAA-3', also known as the PU-box. In vitro can bind RNA and interfere with pre-mRNA splicing. This Mus musculus (Mouse) protein is Transcription factor PU.1 (Spi1).